We begin with the raw amino-acid sequence, 180 residues long: Large ribosomal subunit protein bL17 (180 aa).

The segment at 134 to 180 is disordered; sequence AQAKAKKAAAMPTEESEAKPAEEGDVVGASEPDAKAPEEPPAEAPEN.

This sequence belongs to the bacterial ribosomal protein bL17 family. In terms of assembly, part of the 50S ribosomal subunit. Contacts protein L32.

The protein is Large ribosomal subunit protein bL17 of Mycobacterium tuberculosis (strain ATCC 25177 / H37Ra).